The primary structure comprises 66 residues: MAKGKDIRIRVILECTTCTRNSVNKKSTGISRYITQKNRHNTPSRLELRKFCRYCYKHTIHGEIKK.

Belongs to the bacterial ribosomal protein bL33 family.

Its subcellular location is the plastid. The protein resides in the chloroplast. This Manihot esculenta (Cassava) protein is Large ribosomal subunit protein bL33c.